The sequence spans 400 residues: Putative F-box protein At5g41510 (400 aa).

The F-box domain maps to 2 to 47 (ATMISNLPRDLIEEIFSRVPLTSMKAVRLTCKSWNNLSKSESFTKV).

The polypeptide is Putative F-box protein At5g41510 (Arabidopsis thaliana (Mouse-ear cress)).